We begin with the raw amino-acid sequence, 159 residues long: ATP synthase subunit b' (159 aa).

The chain crosses the membrane as a helical span at residues 27-47 (ATLPLMAVQFLILTVILNALL).

This sequence belongs to the ATPase B chain family. As to quaternary structure, F-type ATPases have 2 components, F(1) - the catalytic core - and F(0) - the membrane proton channel. F(1) has five subunits: alpha(3), beta(3), gamma(1), delta(1), epsilon(1). F(0) has four main subunits: a(1), b(1), b'(1) and c(10-14). The alpha and beta chains form an alternating ring which encloses part of the gamma chain. F(1) is attached to F(0) by a central stalk formed by the gamma and epsilon chains, while a peripheral stalk is formed by the delta, b and b' chains.

Its subcellular location is the cellular thylakoid membrane. Its function is as follows. F(1)F(0) ATP synthase produces ATP from ADP in the presence of a proton or sodium gradient. F-type ATPases consist of two structural domains, F(1) containing the extramembraneous catalytic core and F(0) containing the membrane proton channel, linked together by a central stalk and a peripheral stalk. During catalysis, ATP synthesis in the catalytic domain of F(1) is coupled via a rotary mechanism of the central stalk subunits to proton translocation. Functionally, component of the F(0) channel, it forms part of the peripheral stalk, linking F(1) to F(0). The b'-subunit is a diverged and duplicated form of b found in plants and photosynthetic bacteria. The sequence is that of ATP synthase subunit b' from Synechococcus sp. (strain PCC 6716).